Here is a 294-residue protein sequence, read N- to C-terminus: StAR-related lipid transfer protein 3 (294 aa).

In terms of domain architecture, MENTAL spans 1–66 (DGYICNNGMD…YSPPESLAGS (66 aa)). The FFAT signature appears at 55–61 (QFYSPPE). The tract at residues 58-77 (SPPESLAGSEEDLDEEGLGR) is disordered. In terms of domain architecture, START spans 79–292 (AVSPQEKALV…LRQRIRDLRS (214 aa)).

This sequence belongs to the STARD3 family. In terms of assembly, homodimer. In terms of processing, phosphorylated. Phosphorylation allows the tethering of two membranes that participates in the formation of ER-endosome contacts. Phosphorylation of FFAT motif drives membrane tethering between the endoplasmic reticulum and late endosomes that in turn allows the efficient transport of sterol mediated by the START domain.

It is found in the late endosome membrane. The catalysed reaction is cholesterol(in) = cholesterol(out). Sterol-binding protein that mediates cholesterol transport from the endoplasmic reticulum to endosomes. The sterol transport mechanism is triggered by phosphorylation of FFAT motif that leads to membrane tethering between the endoplasmic reticulum and late endosomes. Acts as a lipid transfer protein that redirects sterol to the endosome at the expense of the cell membrane and favors membrane formation inside endosomes. This Salvelinus fontinalis (Brook trout) protein is StAR-related lipid transfer protein 3.